We begin with the raw amino-acid sequence, 268 residues long: MYLKRNIINMQRSFSRQFHISVRNSIQSSKPLSNSTPLKGCSVGTILIRSPILTRQPSEFEKSIYKYNAELWNELSDPLPAEFYFKKGSVGEKDWQERQKTLKGKESPFETIFGKERKEMESNKLLDSATHLQSRVTEADTKNDERSTLRSLDKSLYLLVKKSKSSGWQFPNTPVTSSEKALHLLCQDLLKNILDENSLTWLVARHPLALLKTEQEKTFLLRARLLNGLDVPNLQNVYDWVWCTYDELKNKLSPSSWDSVKNILSDRL.

The N-terminal 25 residues, 1–25 (MYLKRNIINMQRSFSRQFHISVRNS), are a transit peptide targeting the mitochondrion.

The protein belongs to the mitochondrion-specific ribosomal protein mL46 family. In terms of assembly, component of the mitochondrial large ribosomal subunit (mt-LSU). Mature yeast 74S mitochondrial ribosomes consist of a small (37S) and a large (54S) subunit. The 37S small subunit contains a 15S ribosomal RNA (15S mt-rRNA) and at least 32 different proteins. The 54S large subunit contains a 21S rRNA (21S mt-rRNA) and at least 45 different proteins.

Its subcellular location is the mitochondrion. Its function is as follows. Component of the mitochondrial ribosome (mitoribosome), a dedicated translation machinery responsible for the synthesis of mitochondrial genome-encoded proteins, including at least some of the essential transmembrane subunits of the mitochondrial respiratory chain. The mitoribosomes are attached to the mitochondrial inner membrane and translation products are cotranslationally integrated into the membrane. This is Large ribosomal subunit protein mL46 (mrpl17) from Schizosaccharomyces pombe (strain 972 / ATCC 24843) (Fission yeast).